We begin with the raw amino-acid sequence, 1498 residues long: Golgin subfamily A member 3 (1498 aa).

M1 bears the N-acetylmethionine mark. Residues M1–K118 are disordered. S18 is subject to Phosphoserine. Residues P27–P36 show a composition bias toward pro residues. Residue S57 is modified to Phosphoserine. Positions P71–S81 are enriched in pro residues. Residues L121–P141 form an interaction with GOPC region. Disordered stretches follow at residues R166 to P195 and S216 to T325. The golgi-targeting domain stretch occupies residues E172–G257. Polar residues-rich tracts occupy residues R173–F184 and T269–P291. S272 is modified (phosphoserine). Residues S315–S324 are compositionally biased toward low complexity. Residues S385, S389, and S465 each carry the phosphoserine modification. A coiled-coil region spans residues V394 to S1459. Residues K789–E801 are compositionally biased toward basic and acidic residues. 4 disordered regions span residues K789–T809, Q974–K993, R1376–I1400, and D1440–E1498. Phosphoserine is present on S983. Positions R1376–G1387 are enriched in basic and acidic residues. Phosphoserine is present on S1392. The span at D1440–T1452 shows a compositional bias: basic and acidic residues.

As to quaternary structure, homodimer. Interacts with GOLGA7. Isoform 1 interacts with GOPC while isoform 3 does not. In terms of processing, cleaved by caspases in apoptotic cells. As to expression, expressed in all tissues tested. Expressed in liver, testis, lung, heart, salivary gland and kidney.

It localises to the cytoplasm. The protein localises to the golgi apparatus. Its subcellular location is the golgi stack membrane. Golgi auto-antigen; probably involved in maintaining Golgi structure. In Homo sapiens (Human), this protein is Golgin subfamily A member 3 (GOLGA3).